A 324-amino-acid polypeptide reads, in one-letter code: mRNA decay activator protein ZFP36 (324 aa).

The tract at residues 1 to 15 (MDLAAIYKSLLSLSP) is necessary for nuclear export. Positions 1–98 (MDLAAIYKSL…PTSPTATPTT (98 aa)) are necessary and sufficient for the association with mRNA decay enzymes and mRNA decay activation. 2 necessary for localization of ARE-containing mRNAs to processing bodies (PBs) regions span residues 1-172 (MDLA…DLAA) and 98-324 (TSSR…SVSE). A compositionally biased stretch (low complexity) spans 15-46 (PELPSDLGETESSTSWASSGPWSLSSSDSSLP). The segment at 15–50 (PELPSDLGETESSTSWASSGPWSLSSSDSSLPEVAA) is disordered. A Phosphoserine; by MAPKAPK2 modification is found at serine 58. Serine 64 is modified (phosphoserine). One copy of the P-P-P-P-G repeat lies at 69–73 (PPPPG). A disordered region spans residues 76-100 (PLAPRPSSDWSPSPTSPTATPTTSS). Phosphoserine occurs at positions 86 and 88. Phosphothreonine is present on threonine 90. The residue at position 91 (serine 91) is a Phosphoserine. A necessary for nuclear localization region spans residues 93 to 166 (TATPTTSSRY…GSRCHFIHNP (74 aa)). A necessary for RNA-binding region spans residues 95-171 (TPTTSSRYKT…FIHNPSEDLA (77 aa)). C3H1-type zinc fingers lie at residues 101–129 (RYKT…HGLG) and 139–167 (KYKT…HNPS). The necessary for interaction with PABPN1 stretch occupies residues 101–192 (RYKTELCRTF…ISFSGLPSGR (92 aa)). Phosphoserine is present on serine 167. Residues 172 to 324 (APGHPHVLRQ…PIFNRISVSE (153 aa)) are necessary for mRNA decay activation. At serine 184 the chain carries Phosphoserine; by MAPKAPK2. 2 disordered regions span residues 185–227 (FSGL…LLLS) and 270–324 (PSAH…SVSE). Serine 195 bears the Phosphoserine mark. Residues 196–200 (PPPAS) form a P-P-P-P-G repeat. A compositionally biased stretch (low complexity) spans 204–214 (PSVSSWSFSPS). Residue serine 216 is modified to Phosphoserine. The P-P-P-P-G repeat unit spans residues 218–222 (PPPPG). At serine 227 the chain carries Phosphoserine; by MAPK1; in vitro. Phosphoserine is present on residues serine 274, serine 294, and serine 321. The interaction with CNOT1 stretch occupies residues 310 to 324 (APRRLPIFNRISVSE).

As to quaternary structure, associates with cytoplasmic CCR4-NOT and PAN2-PAN3 deadenylase complexes to trigger ARE-containing mRNA deadenylation and decay processes. Part of a mRNA decay activation complex at least composed of poly(A)-specific exoribonucleases CNOT6, EXOSC2 and XRN1 and mRNA-decapping enzymes DCP1A and DCP2. Associates with the RNA exosome complex. Interacts (via phosphorylated form) with 14-3-3 proteins; these interactions promote exclusion of ZFP36 from cytoplasmic stress granules in response to arsenite treatment in a MAPKAPK2-dependent manner and does not prevent CCR4-NOT deadenylase complex recruitment or ZFP36-induced ARE-containing mRNA deadenylation and decay processes. Interacts with 14-3-3 proteins; these interactions occur in response to rapamycin in an Akt-dependent manner. Interacts with AGO2 and AGO4. Interacts (via C-terminus) with CNOT1; this interaction occurs in a RNA-independent manner and induces mRNA deadenylation. Interacts (via N-terminus) with CNOT6. Interacts with CNOT6L. Interacts (via C-terminus) with CNOT7; this interaction occurs in a RNA-independent manner, induces mRNA deadenylation and is inhibited in a phosphorylation MAPKAPK2-dependent manner. Interacts (via unphosphorylated form) with CNOT8; this interaction occurs in a RNA-independent manner and is inhibited in a phosphorylation MAPKAPK2-dependent manner. Interacts with DCP1A. Interacts (via N-terminus) with DCP2. Interacts with EDC3. Interacts (via N-terminus) with EXOSC2. Interacts with heat shock 70 kDa proteins. Interacts with KHSRP; this interaction increases upon cytokine-induced treatment. Interacts with MAP3K4; this interaction enhances the association with SH3KBP1/CIN85. Interacts with MAPKAPK2; this interaction occurs upon skeletal muscle satellite cell activation. Interacts with NCL. Interacts with NUP214; this interaction increases upon lipopolysaccharide (LPS) stimulation. Interacts with PABPC1; this interaction occurs in a RNA-dependent manner. Interacts (via hypophosphorylated form) with PABPN1 (via RRM domain and C-terminal arginine-rich region); this interaction occurs in the nucleus in a RNA-independent manner, decreases in presence of single-stranded poly(A) RNA-oligomer and in a p38 MAPK-dependent-manner and inhibits nuclear poly(A) tail synthesis. Interacts with PAN2. Interacts (via C3H1-type zinc finger domains) with PKM. Interacts (via C3H1-type zinc finger domains) with nuclear RNA poly(A) polymerase. Interacts with PPP2CA; this interaction occurs in LPS-stimulated cells and induces ZFP36 dephosphorylation, and hence may promote ARE-containing mRNAs decay. Interacts (via C-terminus) with PRR5L (via C-terminus); this interaction may accelerate ZFP36-mediated mRNA decay during stress. Interacts (via C-terminus) with SFN; this interaction occurs in a phosphorylation-dependent manner. Interacts (via extreme C-terminal region) with SH3KBP1/CIN85 (via SH3 domains); this interaction enhances MAP3K4-induced phosphorylation of ZFP36 at Ser-64 and Ser-91 and does not alter neither ZFP36 binding to ARE-containing transcripts nor TNF-alpha mRNA decay. Interacts with XRN1. Interacts (via C-terminus and Ser-184 phosphorylated form) with YWHAB; this interaction occurs in a p38/MAPKAPK2-dependent manner, increases cytoplasmic localization of ZFP36 and protects ZFP36 from Ser-184 dephosphorylation by serine/threonine phosphatase 2A, and hence may be crucial for stabilizing ARE-containing mRNAs. Interacts (via phosphorylated form) with YWHAE. Interacts (via C-terminus) with YWHAG; this interaction occurs in a phosphorylation-dependent manner. Interacts with YWHAH; this interaction occurs in a phosphorylation-dependent manner. Interacts with YWHAQ; this interaction occurs in a phosphorylation-dependent manner. Interacts with (via C-terminus) YWHAZ; this interaction occurs in a phosphorylation-dependent manner. Does not interact with SH3KBP1. Interacts (via P-P-P-P-G repeats) with GIGYF2; the interaction is direct. Post-translationally, phosphorylated. Phosphorylation at serine and/or threonine residues occurs in a p38 MAPK- and MAPKAPK2-dependent manner. Phosphorylated by MAPKAPK2 at Ser-58 and Ser-184; phosphorylation increases its stability and cytoplasmic localization, promotes binding to 14-3-3 adapter proteins and inhibits the recruitment of cytoplasmic CCR4-NOT and PAN2-PAN3 deadenylase complexes to the mRNA decay machinery, thereby inhibiting ZFP36-induced ARE-containing mRNA deadenylation and decay processes. Phosphorylation by MAPKAPK2 does not impair ARE-containing RNA-binding. Phosphorylated in a MAPKAPK2- and p38 MAPK-dependent manner upon skeletal muscle satellite cell activation; this phosphorylation inhibits ZFP36-mediated mRNA decay activity, and hence stabilizes MYOD1 mRNA. Phosphorylated by MAPK1 upon mitogen stimulation. Phosphorylated at Ser-64 and Ser-91; these phosphorylations increase in a SH3KBP1-dependent manner. Phosphorylated at serine and threonine residues in a pyruvate kinase PKM- and p38 MAPK-dependent manner. Phosphorylation at Ser-58 may participate in the PKM-mediated degradation of ZFP36 in a p38 MAPK-dependent manner. Dephosphorylated by serine/threonine phosphatase 2A at Ser-184. Ubiquitinated; pyruvate kinase (PKM)-dependent ubiquitination leads to proteasomal degradation through a p38 MAPK signaling pathway.

The protein resides in the nucleus. It is found in the cytoplasm. The protein localises to the cytoplasmic granule. Its subcellular location is the P-body. In terms of biological role, zinc-finger RNA-binding protein that destabilizes numerous cytoplasmic AU-rich element (ARE)-containing mRNA transcripts by promoting their poly(A) tail removal or deadenylation, and hence provide a mechanism for attenuating protein synthesis. Acts as an 3'-untranslated region (UTR) ARE mRNA-binding adapter protein to communicate signaling events to the mRNA decay machinery. Recruits deadenylase CNOT7 (and probably the CCR4-NOT complex) via association with CNOT1, and hence promotes ARE-mediated mRNA deadenylation. Also functions by recruiting components of the cytoplasmic RNA decay machinery to the bound ARE-containing mRNAs. Self regulates by destabilizing its own mRNA. Binds to 3'-UTR ARE of numerous mRNAs. Also binds to ARE of its own mRNA. Plays a role in anti-inflammatory responses; suppresses tumor necrosis factor (TNF)-alpha production by stimulating ARE-mediated TNF-alpha mRNA decay and several other inflammatory ARE-containing mRNAs in interferon (IFN)- and/or lipopolysaccharide (LPS)-induced macrophages. Also plays a role in the regulation of dendritic cell maturation at the post-transcriptional level, and hence operates as part of a negative feedback loop to limit the inflammatory response. Promotes ARE-mediated mRNA decay of hypoxia-inducible factor HIF1A mRNA during the response of endothelial cells to hypoxia. Positively regulates early adipogenesis of preadipocytes by promoting ARE-mediated mRNA decay of immediate early genes (IEGs). Negatively regulates hematopoietic/erythroid cell differentiation by promoting ARE-mediated mRNA decay of the transcription factor STAT5B mRNA. Plays a role in maintaining skeletal muscle satellite cell quiescence by promoting ARE-mediated mRNA decay of the myogenic determination factor MYOD1 mRNA. Also associates with and regulates the expression of non-ARE-containing target mRNAs at the post-transcriptional level, such as MHC class I mRNAs. Participates in association with argonaute RISC catalytic components in the ARE-mediated mRNA decay mechanism; assists microRNA (miRNA) targeting ARE-containing mRNAs. May also play a role in the regulation of cytoplasmic mRNA decapping; enhances decapping of ARE-containing RNAs, in vitro. Involved in the delivery of target ARE-mRNAs to processing bodies (PBs). In addition to its cytosolic mRNA-decay function, affects nuclear pre-mRNA processing. Negatively regulates nuclear poly(A)-binding protein PABPN1-stimulated polyadenylation activity on ARE-containing pre-mRNA during LPS-stimulated macrophages. Also involved in the regulation of stress granule (SG) and P-body (PB) formation and fusion. Plays a role in the regulation of keratinocyte proliferation, differentiation and apoptosis. Plays a role as a tumor suppressor by inhibiting cell proliferation in breast cancer cells. This is mRNA decay activator protein ZFP36 from Bos taurus (Bovine).